The following is an 89-amino-acid chain: Small ribosomal subunit protein uS15 (89 aa).

This sequence belongs to the universal ribosomal protein uS15 family. Part of the 30S ribosomal subunit. Forms a bridge to the 50S subunit in the 70S ribosome, contacting the 23S rRNA.

Functionally, one of the primary rRNA binding proteins, it binds directly to 16S rRNA where it helps nucleate assembly of the platform of the 30S subunit by binding and bridging several RNA helices of the 16S rRNA. In terms of biological role, forms an intersubunit bridge (bridge B4) with the 23S rRNA of the 50S subunit in the ribosome. The chain is Small ribosomal subunit protein uS15 from Methylocella silvestris (strain DSM 15510 / CIP 108128 / LMG 27833 / NCIMB 13906 / BL2).